The sequence spans 340 residues: DNA repair protein RAD51 homolog A (340 aa).

The span at 1–14 (MSSAAQQQQKAAAA) shows a compositional bias: low complexity. A disordered region spans residues 1 to 21 (MSSAAQQQQKAAAAEQEEVEH). The region spanning 49–78 (TVEAVAYTPRKDLLQIKGISEAKADKIIEA) is the HhH domain. 128–135 (GEFRSGKT) contributes to the ATP binding site.

Belongs to the RecA family. RAD51 subfamily. Self-associates and may interact with XRCC3 homolog. Highly expressed in mitotic and meiotic tissues, but low levels in differentiated tissues.

The protein resides in the nucleus. Functionally, binds to single and double-stranded DNA and exhibits DNA-dependent ATPase activity. Unwinds duplex DNA. Component of the meiotic recombination pathway. Seems to play a role in mediating chromosome homology search, chromosome pairing and synapsis at early stages and probably chromosome crossing-over at later stages in meiosis. Probably is involved in the repair of meiotic double strand breaks (DBSs) and in homologous recombination. This is DNA repair protein RAD51 homolog A (RAD51A) from Zea mays (Maize).